A 330-amino-acid chain; its full sequence is Ketol-acid reductoisomerase (NADP(+)) (330 aa).

Positions 2-182 (VKIFYDKDVT…GLTKVGVIQT (181 aa)) constitute a KARI N-terminal Rossmann domain. NADP(+)-binding positions include 25-28 (YGSQ), Arg-48, Ser-53, and 83-86 (DEVQ). His-108 is a catalytic residue. Residue Gly-134 participates in NADP(+) binding. The KARI C-terminal knotted domain maps to 183–328 (TFREETETDL…KELRKMCGLE (146 aa)). The Mg(2+) site is built by Asp-191, Glu-195, Glu-227, and Glu-231. Ser-252 is a substrate binding site.

This sequence belongs to the ketol-acid reductoisomerase family. Mg(2+) is required as a cofactor.

It carries out the reaction (2R)-2,3-dihydroxy-3-methylbutanoate + NADP(+) = (2S)-2-acetolactate + NADPH + H(+). The enzyme catalyses (2R,3R)-2,3-dihydroxy-3-methylpentanoate + NADP(+) = (S)-2-ethyl-2-hydroxy-3-oxobutanoate + NADPH + H(+). It participates in amino-acid biosynthesis; L-isoleucine biosynthesis; L-isoleucine from 2-oxobutanoate: step 2/4. Its pathway is amino-acid biosynthesis; L-valine biosynthesis; L-valine from pyruvate: step 2/4. Involved in the biosynthesis of branched-chain amino acids (BCAA). Catalyzes an alkyl-migration followed by a ketol-acid reduction of (S)-2-acetolactate (S2AL) to yield (R)-2,3-dihydroxy-isovalerate. In the isomerase reaction, S2AL is rearranged via a Mg-dependent methyl migration to produce 3-hydroxy-3-methyl-2-ketobutyrate (HMKB). In the reductase reaction, this 2-ketoacid undergoes a metal-dependent reduction by NADPH to yield (R)-2,3-dihydroxy-isovalerate. The sequence is that of Ketol-acid reductoisomerase (NADP(+)) from Methanocaldococcus jannaschii (strain ATCC 43067 / DSM 2661 / JAL-1 / JCM 10045 / NBRC 100440) (Methanococcus jannaschii).